The following is a 117-amino-acid chain: Appetite-regulating hormone (117 aa).

The N-terminal stretch at 1-23 (MPSLGTMCSLLLFSVLWVDLAMA) is a signal peptide. The O-decanoyl serine; alternate moiety is linked to residue Ser-26. The O-hexanoyl serine; alternate moiety is linked to residue Ser-26. Residue Ser-26 is the site of O-octanoyl serine; alternate attachment. Residues 30–68 (PEHQKLQQRKESKKPPAKLQPRALEGSLGPEDTSQVEEA) form a disordered region. A compositionally biased stretch (basic and acidic residues) spans 31–43 (EHQKLQQRKESKK). The propeptide at 52 to 75 (ALEGSLGPEDTSQVEEAEDELEIR) is removed in mature form. A Leucine amide modification is found at Leu-98. The propeptide at 99–117 (GKFLQEVLWEDTNEALADE) is removed in mature form.

Belongs to the motilin family. Post-translationally, O-octanoylated by GOAT/MBOAT4. O-octanoylation is essential for ghrelin activity. Amidation of Leu-98 is essential for obestatin activity.

It is found in the secreted. Functionally, ghrelin is the ligand for growth hormone secretagogue receptor type 1 (GHSR). Induces the release of growth hormone from the pituitary. Has an appetite-stimulating effect, induces adiposity and stimulates gastric acid secretion. Involved in growth regulation. In terms of biological role, obestatin may be the ligand for GPR39. May have an appetite-reducing effect resulting in decreased food intake. May reduce gastric emptying activity and jejunal motility. The protein is Appetite-regulating hormone (GHRL) of Canis lupus familiaris (Dog).